The chain runs to 581 residues: mRNA-decapping enzyme 1B (581 aa).

A Phosphoserine modification is found at Ser145. 2 disordered regions span residues 181–222 (QISS…PEPQ) and 236–258 (APCQ…PEKF). The segment covering 204–219 (GSRQQRGPRPGQTSDP) has biased composition (polar residues). Positions 244–255 (PPQTLPLQQQQP) are enriched in low complexity. Residues Ser269 and Ser326 each carry the phosphoserine modification. The segment at 349–411 (AENRCEPGAP…HQPVTGPGEV (63 aa)) is disordered. Residues 355-367 (PGAPAPASSATTP) are compositionally biased toward low complexity. Position 366 is a phosphothreonine (Thr366). Residues 368–381 (VSLAQPTRLSSALP) show a composition bias toward polar residues. Positions 382-401 (PQTPGPRALPRPAPPGPGPG) are enriched in pro residues. Ser412 is modified (phosphoserine). Residues 427-468 (QQLPAPGRPALAAKFPTATLSTRARNPLEPWRDPPPSTEQPA) form a disordered region. Ser475 is subject to Phosphoserine. Residues 498–522 (SWAPPQERSRAPLPPGNQDPAATPT) form a disordered region.

It belongs to the DCP1 family. In terms of assembly, interacts with DCP1A.

Its subcellular location is the cytoplasm. The protein resides in the nucleus. It catalyses the reaction a 5'-end (N(7)-methyl 5'-triphosphoguanosine)-ribonucleoside in mRNA + H2O = N(7)-methyl-GDP + a 5'-end phospho-ribonucleoside in mRNA + 2 H(+). Its function is as follows. May play a role in the degradation of mRNAs, both in normal mRNA turnover and in nonsense-mediated mRNA decay. May remove the 7-methyl guanine cap structure from mRNA molecules, yielding a 5'-phosphorylated mRNA fragment and 7m-GDP. The sequence is that of mRNA-decapping enzyme 1B (DCP1B) from Bos taurus (Bovine).